The chain runs to 744 residues: MSRKVTKYSAVLAVSLFAAALAGCGSENKEGTVGTGPGGVATVGDSACVQCHSAVTEALTGESLIAQYQKSSPHNTAGLGCESCHGGGAQHNGVGPIPFAQPDASRCADCHDGTTAVATNSDTAFAESRHNIQTIRSGATCRRCHTHEGAVLSNIAGYTGDLATLEDTVNQNKVPLVSSYSQISCATCHEHGGGLRTIKATNGAAGPVVNWDPNNNRTVDQFDLCTSCHNMYSYNGSTLLTNGVPVNGVATGTVGHHETTWYRIIATTHFDNYSTGPQAGAGASGTNAKVEGYVLRRTGANPCFDCHGHEAKTNTRPGRDATIHTDWAKSAHAGGLLTAKYNAVGALTGAAAVNAAMNAYVDDTTAIAWTHYNWDASSRGSCQRCHTATGAANFMSNPAGYDPTGAGNSFSHLQGWSAANGSKQNELLYCWGCHTNAGTGELRNPGAITENYAGVNSTSTGTTGTAVTISYPDIAGSNVCMTCHLGREAGENIKAITDADGILGFVNSHYLAAGGQLFGKTGYEYATRSYAKPTFFAHDKIGTAAAPGTGTNGPCAGCHMTTPNSHSFLPVTKDGTGAVTAITSTACATCHAGAYALTPEALTAEEEEYVASLEALKAALAGKGILFFNAHPYFYRDTNANGIGDPGELVSSNAFTNWAGVYGLALWKDVMGAAFNANLLIHDPGGYAHNRFYVKRLIWDSIDFIYDGVLNNDVTAAIDAQVTATRLDSATATAAKAYLGTTRP.

The N-terminal stretch at 1–23 (MSRKVTKYSAVLAVSLFAAALAG) is a signal peptide. The N-palmitoyl cysteine moiety is linked to residue C24. The S-diacylglycerol cysteine moiety is linked to residue C24. Heme c-binding residues include C48, C51, H52, C81, C84, H85, C107, C110, H111, C141, C144, H145, C185, C188, H189, C225, C228, H229, C303, C306, H307, C382, C385, H386, C430, C433, H434, C480, C483, H484, C555, C558, H559, C587, C590, and H591.

Binds 12 heme c groups per subunit.

Its subcellular location is the cell outer membrane. Its function is as follows. Involved in anaerobic respiration with Fe(3+) as terminal electron acceptor. Acts as an electron-transport mediator in the dissimilatory reduction of Fe(3+). In Geobacter sulfurreducens (strain DL-1 / KN400), this protein is C-type polyheme cytochrome OmcB (omcB).